The following is a 532-amino-acid chain: Flavin-containing monooxygenase 3 (532 aa).

FAD contacts are provided by residues 9–13 (GAGVS), E32, 40–41 (LW), and 61–62 (NS). NADP(+) contacts are provided by residues 60–61 (TN) and 195–198 (SGCD). At S401 the chain carries Phosphoserine. Residues 510–530 (FFFHWLKPFAIPILLIAVFLG) traverse the membrane as a helical segment.

Belongs to the FMO family. FAD is required as a cofactor. As to expression, liver.

It is found in the microsome membrane. Its subcellular location is the endoplasmic reticulum membrane. It carries out the reaction trimethylamine + NADPH + O2 = trimethylamine N-oxide + NADP(+) + H2O. It catalyses the reaction N,N-dimethylaniline + NADPH + O2 + H(+) = N,N-dimethylaniline N-oxide + NADP(+) + H2O. The enzyme catalyses hypotaurine + NADPH + O2 + H(+) = taurine + NADP(+) + H2O. The catalysed reaction is (S)-nicotine + NADPH + O2 = trans-(S)-nicotine N(1')-oxide + NADP(+) + H2O. It carries out the reaction albendazole + NADPH + O2 + H(+) = albendazole S-oxide + NADP(+) + H2O. Essential hepatic enzyme that catalyzes the oxygenation of a wide variety of nitrogen- and sulfur-containing compounds including drugs as well as dietary compounds. Plays an important role in the metabolism of trimethylamine (TMA), via the production of trimethylamine N-oxide (TMAO) metabolite. TMA is generated by the action of gut microbiota using dietary precursors such as choline, choline containing compounds, betaine or L-carnitine. By regulating TMAO concentration, FMO3 directly impacts both platelet responsiveness and rate of thrombus formation. The polypeptide is Flavin-containing monooxygenase 3 (FMO3) (Macaca mulatta (Rhesus macaque)).